We begin with the raw amino-acid sequence, 162 residues long: Lipoprotein signal peptidase (162 aa).

A run of 2 helical transmembrane segments spans residues 56 to 76 and 84 to 104; these read FLPP…VVWY and SPLF…NLID. Catalysis depends on residues Asp113 and Asp139. Residues 132–152 traverse the membrane as a helical segment; that stretch reads WPIFNVADSCITIGACMIVLF.

This sequence belongs to the peptidase A8 family.

The protein localises to the cell inner membrane. It catalyses the reaction Release of signal peptides from bacterial membrane prolipoproteins. Hydrolyzes -Xaa-Yaa-Zaa-|-(S,diacylglyceryl)Cys-, in which Xaa is hydrophobic (preferably Leu), and Yaa (Ala or Ser) and Zaa (Gly or Ala) have small, neutral side chains.. It functions in the pathway protein modification; lipoprotein biosynthesis (signal peptide cleavage). This protein specifically catalyzes the removal of signal peptides from prolipoproteins. The protein is Lipoprotein signal peptidase of Chlorobaculum tepidum (strain ATCC 49652 / DSM 12025 / NBRC 103806 / TLS) (Chlorobium tepidum).